We begin with the raw amino-acid sequence, 370 residues long: Dihydroorotate dehydrogenase (quinone) (370 aa).

FMN-binding positions include 80–84 (AGFDK) and Thr104. Lys84 is a binding site for substrate. 129–133 (NRMGF) serves as a coordination point for substrate. FMN is bound by residues Asn157 and Asn190. Asn190 contacts substrate. The Nucleophile role is filled by Ser193. Residue Asn195 participates in substrate binding. Residues Lys226 and Thr254 each contribute to the FMN site. 255-256 (NT) lines the substrate pocket. FMN contacts are provided by residues Gly278, Gly307, and 328 to 329 (YT).

Belongs to the dihydroorotate dehydrogenase family. Type 2 subfamily. In terms of assembly, monomer. Requires FMN as cofactor.

The protein resides in the cell membrane. It catalyses the reaction (S)-dihydroorotate + a quinone = orotate + a quinol. The protein operates within pyrimidine metabolism; UMP biosynthesis via de novo pathway; orotate from (S)-dihydroorotate (quinone route): step 1/1. In terms of biological role, catalyzes the conversion of dihydroorotate to orotate with quinone as electron acceptor. This Mycolicibacterium paratuberculosis (strain ATCC BAA-968 / K-10) (Mycobacterium paratuberculosis) protein is Dihydroorotate dehydrogenase (quinone).